Consider the following 586-residue polypeptide: Chaperone protein HscA homolog (586 aa).

It belongs to the heat shock protein 70 family.

In terms of biological role, chaperone involved in the maturation of iron-sulfur cluster-containing proteins. Has a low intrinsic ATPase activity which is markedly stimulated by HscB. The protein is Chaperone protein HscA homolog of Rickettsia typhi (strain ATCC VR-144 / Wilmington).